Reading from the N-terminus, the 404-residue chain is Argininosuccinate synthase (404 aa).

Residues 11 to 19 (AYSGGLDTS) and Ala40 each bind ATP. 2 residues coordinate L-citrulline: Tyr92 and Ser97. Gly122 is an ATP binding site. The L-aspartate site is built by Thr124, Asn128, and Asp129. L-citrulline is bound at residue Asn128. Residues Arg132, Ser181, Ser190, Glu266, and Tyr278 each contribute to the L-citrulline site.

Belongs to the argininosuccinate synthase family. Type 1 subfamily. As to quaternary structure, homotetramer.

It is found in the cytoplasm. The catalysed reaction is L-citrulline + L-aspartate + ATP = 2-(N(omega)-L-arginino)succinate + AMP + diphosphate + H(+). It functions in the pathway amino-acid biosynthesis; L-arginine biosynthesis; L-arginine from L-ornithine and carbamoyl phosphate: step 2/3. This chain is Argininosuccinate synthase, found in Moritella abyssi.